The following is a 268-amino-acid chain: Small ribosomal subunit protein uS2 (268 aa).

Residues 161 to 179 are laminin-binding; the sequence is IPCNNDKYSIALMLWMLAR.

The protein belongs to the universal ribosomal protein uS2 family. In terms of assembly, component of the small ribosomal subunit. Mature ribosomes consist of a small (40S) and a large (60S) subunit. The 40S subunit contains about 33 different proteins and 1 molecule of RNA (18S). The 60S subunit contains about 49 different proteins and 3 molecules of RNA (28S, 5.8S and 5S). Interacts with ribosomal protein S21.

The protein localises to the cytoplasm. Its function is as follows. Required for the assembly and/or stability of the 40S ribosomal subunit. Required for the processing of the 20S rRNA-precursor to mature 18S rRNA in a late step of the maturation of 40S ribosomal subunits. Binds laminin. The polypeptide is Small ribosomal subunit protein uS2 (egmo3) (Echinococcus granulosus (Hydatid tapeworm)).